Reading from the N-terminus, the 785-residue chain is AP-1 complex subunit gamma-like 2 (785 aa).

The tract at residues 369-379 (LSLALVNSSNV) is essential for ubiquitin-binding. The tract at residues 592–617 (GPQADEEAKESKEAAQLSEAAPVPTE) is disordered. The GAE domain occupies 665–780 (APIPDLKVFE…QEIFEVNNLP (116 aa)).

It belongs to the adaptor complexes large subunit family. As to quaternary structure, may interact with AP1S1/Sigma1A-adaptin and AP1S2/Sigma1B-adaptin. Probably does not interact with APB1. Interacts (via GAE domain) with RABEP1, NECAP1, CLINT1 and AFTPH/aftiphilin. (Microbial infection) Interacts with HBV major surface antigen L. Interacts with HBV core protein C in a ubiquitin-dependent manner. In terms of tissue distribution, expressed in all but one (skeletal muscle) tissues examined.

It is found in the golgi apparatus membrane. The protein localises to the cytoplasmic vesicle membrane. The protein resides in the endosome membrane. Its function is as follows. May function in protein sorting in late endosomes or multivesucular bodies (MVBs). Functionally, (Microbial infection) Involved in MVB-assisted maturation of hepatitis B virus (HBV). The protein is AP-1 complex subunit gamma-like 2 (AP1G2) of Homo sapiens (Human).